The primary structure comprises 640 residues: Threonine--tRNA ligase (640 aa).

A TGS domain is found at 1–61; the sequence is MPIITLPNGD…TEDSTLQIIT (61 aa). The tract at residues 242-533 is catalytic; the sequence is DHRKIGKALD…LIEHYAGFMP (292 aa). The Zn(2+) site is built by Cys333, His384, and His510.

Belongs to the class-II aminoacyl-tRNA synthetase family. In terms of assembly, homodimer. Zn(2+) is required as a cofactor.

Its subcellular location is the cytoplasm. The enzyme catalyses tRNA(Thr) + L-threonine + ATP = L-threonyl-tRNA(Thr) + AMP + diphosphate + H(+). Catalyzes the attachment of threonine to tRNA(Thr) in a two-step reaction: L-threonine is first activated by ATP to form Thr-AMP and then transferred to the acceptor end of tRNA(Thr). Also edits incorrectly charged L-seryl-tRNA(Thr). This is Threonine--tRNA ligase from Acinetobacter baumannii (strain AB307-0294).